Consider the following 147-residue polypeptide: UPF0275 protein PM0504 (147 aa).

Belongs to the UPF0275 family.

The polypeptide is UPF0275 protein PM0504 (Pasteurella multocida (strain Pm70)).